A 726-amino-acid chain; its full sequence is MIYSLKHLNKYLPEIKLDQSVTKALESLGFEVEFFEKFSSSKGLLFAKVLNVFDNPNSTKLQVVELDTKLGELTIQTTNKVLSKGDLTICYPVGSSYQGKEFQEVTMQGYKSQGMLASFSEIGYDNSLLTDKDQILVLPKNFASLNDDASEKLELNDYIFELSITTNRNEINSYYFLAKELAAYYNTKFSCEFLDAKLKQSFESSFKFEGNFLDKNYSFTLLEAKGKVSTSFEEKLLLAKHKIDSKFNPAVNLTNLVLINLGIPIHVYDKAKLKSTKFSVGLYNGKVNLLGNKQVEVSDALAVFNGDKVVSLAATMGLEESKVDLQTSEFIFEMASFPSKLIRNNAKEIKMNSNASNLASKTITKYQVKLAHKFLFNYLKDLKLSNVVNDFELDKKVEINFDEEKLQRYSNGLPSSEFIKAFDKLKLLEFEFENQKIKVPLYRYDVSIFEDIIEELFRFYNYDNFKEIPYIQIPGELKADNKNFKEKLKALGYSEARTFTLVNEKDSKFDPLDLSDAIKLETFVSKEREFVRNSLAISLAEAVNNNKKKKINNVNLFEVGMVNANLFYACLATTDKSFLELKQDFVSFFDNLNLEFKKPKNQFLHPNYSAEIYLNDQKLGWIGKINPSFLDLDCLFVEFKYDLYFDDKFKKYEAPNLDVLKSIDLTFELNNNEHLQKYLDKINSVAKVFEIKEIDDFKKETSHNVSLRITAPSAEIDKLNSHFNKD.

In terms of domain architecture, tRNA-binding spans 38 to 150; that stretch reads FSSSKGLLFA…NFASLNDDAS (113 aa). The region spanning 394–467 is the B5 domain; it reads DKKVEINFDE…RFYNYDNFKE (74 aa). Positions 445, 451, 454, and 455 each coordinate Mg(2+).

It belongs to the phenylalanyl-tRNA synthetase beta subunit family. Type 1 subfamily. As to quaternary structure, tetramer of two alpha and two beta subunits. It depends on Mg(2+) as a cofactor.

Its subcellular location is the cytoplasm. It carries out the reaction tRNA(Phe) + L-phenylalanine + ATP = L-phenylalanyl-tRNA(Phe) + AMP + diphosphate + H(+). This Mycoplasmopsis synoviae (strain 53) (Mycoplasma synoviae) protein is Phenylalanine--tRNA ligase beta subunit.